The sequence spans 308 residues: Ribosomal RNA small subunit methyltransferase H (308 aa).

Residues 35-37, D55, F79, D100, and Q107 each bind S-adenosyl-L-methionine; that span reads GGH.

Belongs to the methyltransferase superfamily. RsmH family.

Its subcellular location is the cytoplasm. It catalyses the reaction cytidine(1402) in 16S rRNA + S-adenosyl-L-methionine = N(4)-methylcytidine(1402) in 16S rRNA + S-adenosyl-L-homocysteine + H(+). In terms of biological role, specifically methylates the N4 position of cytidine in position 1402 (C1402) of 16S rRNA. This chain is Ribosomal RNA small subunit methyltransferase H, found in Dechloromonas aromatica (strain RCB).